The chain runs to 452 residues: Bis(5'-adenosyl)-triphosphatase enpp4 (452 aa).

The signal sequence occupies residues 1 to 19 (MFGRVFIVAVLYCITICKG). Residues 20–407 (EDPTNSSTPK…NQWCIQVSEA (388 aa)) lie on the Extracellular side of the membrane. The N-linked (GlcNAc...) asparagine glycan is linked to N24. The Zn(2+) site is built by D36 and T72. The active-site AMP-threonine intermediate is T72. N93 contacts substrate. The N-linked (GlcNAc...) asparagine glycan is linked to N107. Y154 contributes to the substrate binding site. Residues N155 and N175 are each glycosylated (N-linked (GlcNAc...) asparagine). Positions 189 and 193 each coordinate Zn(2+). Position 189 (D189) interacts with substrate. A glycan (N-linked (GlcNAc...) asparagine) is linked at N202. Zn(2+) contacts are provided by D237 and H238. C254 and C287 form a disulfide bridge. N-linked (GlcNAc...) asparagine glycosylation is found at N259 and N327. H336 is a Zn(2+) binding site. N386 is a glycosylation site (N-linked (GlcNAc...) asparagine). C394 and C401 are disulfide-bonded. The helical transmembrane segment at 408–428 (IGIVIGAIMVLTTLTCIIIML) threads the bilayer. Over 429–452 (KKKMPSARPFSRLQFQDDDDPLIG) the chain is Cytoplasmic.

It belongs to the nucleotide pyrophosphatase/phosphodiesterase family. Requires Zn(2+) as cofactor.

Its subcellular location is the cell membrane. The enzyme catalyses P(1),P(3)-bis(5'-adenosyl) triphosphate + H2O = AMP + ADP + 2 H(+). Its function is as follows. Hydrolyzes extracellular Ap3A into AMP and ADP, and Ap4A into AMP and ATP. Ap3A and Ap4A are diadenosine polyphosphates thought to induce proliferation of vascular smooth muscle cells. Acts as a procoagulant, mediating platelet aggregation at the site of nascent thrombus via release of ADP from Ap3A and activation of ADP receptors. The protein is Bis(5'-adenosyl)-triphosphatase enpp4 (enpp4) of Xenopus laevis (African clawed frog).